Here is a 243-residue protein sequence, read N- to C-terminus: Auxin-induced protein AUX28 (243 aa).

An EAR-like (transcriptional repression) motif is present at residues 8-12; the sequence is LRLGL. A disordered region spans residues 54–91; sequence AATTAAAAADPTDKHKTLPKEKTLLPADPAKPPAKTQV. Residues 64-76 show a composition bias toward basic and acidic residues; the sequence is PTDKHKTLPKEKT. Over residues 77–89 the composition is skewed to low complexity; sequence LLPADPAKPPAKT. Residues 123–223 enclose the PB1 domain; the sequence is ASFVKVSMDG…SCKRLRIMKG (101 aa).

Belongs to the Aux/IAA family. Homodimers and heterodimers.

It localises to the nucleus. Aux/IAA proteins are short-lived transcriptional factors that function as repressors of early auxin response genes at low auxin concentrations. Repression is thought to result from the interaction with auxin response factors (ARFs), proteins that bind to the auxin-responsive promoter element (AuxRE). Formation of heterodimers with ARF proteins may alter their ability to modulate early auxin response genes expression. This chain is Auxin-induced protein AUX28 (AUX28), found in Glycine max (Soybean).